Consider the following 431-residue polypeptide: Anaerobic glycerol-3-phosphate dehydrogenase subunit B (431 aa).

Belongs to the anaerobic G-3-P dehydrogenase subunit B family. Composed of a catalytic GlpA/B dimer and of membrane bound GlpC. It depends on FMN as a cofactor.

The enzyme catalyses a quinone + sn-glycerol 3-phosphate = dihydroxyacetone phosphate + a quinol. It functions in the pathway polyol metabolism; glycerol degradation via glycerol kinase pathway; glycerone phosphate from sn-glycerol 3-phosphate (anaerobic route): step 1/1. Functionally, conversion of glycerol 3-phosphate to dihydroxyacetone. Uses fumarate or nitrate as electron acceptor. The chain is Anaerobic glycerol-3-phosphate dehydrogenase subunit B from Mannheimia succiniciproducens (strain KCTC 0769BP / MBEL55E).